We begin with the raw amino-acid sequence, 467 residues long: Ribulose bisphosphate carboxylase large chain (467 aa).

Positions 1 to 2 are excised as a propeptide; that stretch reads MS. N-acetylproline is present on Pro-3. The residue at position 14 (Lys-14) is an N6,N6,N6-trimethyllysine. Substrate-binding residues include Asn-123 and Thr-173. Lys-175 acts as the Proton acceptor in catalysis. Lys-177 contacts substrate. The Mg(2+) site is built by Lys-201, Asp-203, and Glu-204. Lys-201 carries the post-translational modification N6-carboxylysine. His-294 functions as the Proton acceptor in the catalytic mechanism. Residues Arg-295, His-327, and Ser-379 each contribute to the substrate site.

The protein belongs to the RuBisCO large chain family. Type I subfamily. In terms of assembly, heterohexadecamer of 8 large chains and 8 small chains; disulfide-linked. The disulfide link is formed within the large subunit homodimers. It depends on Mg(2+) as a cofactor. The disulfide bond which can form in the large chain dimeric partners within the hexadecamer appears to be associated with oxidative stress and protein turnover.

It localises to the plastid. The protein resides in the chloroplast. The catalysed reaction is 2 (2R)-3-phosphoglycerate + 2 H(+) = D-ribulose 1,5-bisphosphate + CO2 + H2O. It carries out the reaction D-ribulose 1,5-bisphosphate + O2 = 2-phosphoglycolate + (2R)-3-phosphoglycerate + 2 H(+). Its function is as follows. RuBisCO catalyzes two reactions: the carboxylation of D-ribulose 1,5-bisphosphate, the primary event in carbon dioxide fixation, as well as the oxidative fragmentation of the pentose substrate in the photorespiration process. Both reactions occur simultaneously and in competition at the same active site. In Phoenix reclinata (Senegal date palm), this protein is Ribulose bisphosphate carboxylase large chain.